Reading from the N-terminus, the 459-residue chain is Methionine aminopeptidase 2-1 (459 aa).

Positions 1-12 (MGSKSPEDHRQG) are enriched in basic and acidic residues. Positions 1–79 (MGSKSPEDHR…RKRNKKKSKK (79 aa)) are disordered. Acidic residues predominate over residues 43–54 (GQDEDGDDDDDE). The span at 67 to 79 (KKKRKRNKKKSKK) shows a compositional bias: basic residues. His210 serves as a coordination point for substrate. Positions 231, 242, and 311 each coordinate a divalent metal cation. His319 is a binding site for substrate. Glu344 and Glu440 together coordinate a divalent metal cation.

It belongs to the peptidase M24A family. Methionine aminopeptidase eukaryotic type 2 subfamily. The cofactor is Co(2+). Requires Zn(2+) as cofactor. Mn(2+) serves as cofactor. Fe(2+) is required as a cofactor.

The protein resides in the cytoplasm. It catalyses the reaction Release of N-terminal amino acids, preferentially methionine, from peptides and arylamides.. Its function is as follows. Cotranslationally removes the N-terminal methionine from nascent proteins. The N-terminal methionine is often cleaved when the second residue in the primary sequence is small and uncharged (Met-Ala-, Cys, Gly, Pro, Ser, Thr, or Val). This is Methionine aminopeptidase 2-1 from Pyrenophora tritici-repentis (strain Pt-1C-BFP) (Wheat tan spot fungus).